A 399-amino-acid polypeptide reads, in one-letter code: Argininosuccinate synthase (399 aa).

8 to 16 (AYSGGLDTS) is an ATP binding site. Tyr-87 is an L-citrulline binding site. Residue Gly-117 participates in ATP binding. 3 residues coordinate L-aspartate: Thr-119, Asn-123, and Asp-124. L-citrulline is bound at residue Asn-123. Residues Arg-127, Ser-175, Glu-260, and Tyr-272 each contribute to the L-citrulline site.

The protein belongs to the argininosuccinate synthase family. Type 1 subfamily. As to quaternary structure, homotetramer.

The protein localises to the cytoplasm. It catalyses the reaction L-citrulline + L-aspartate + ATP = 2-(N(omega)-L-arginino)succinate + AMP + diphosphate + H(+). It participates in amino-acid biosynthesis; L-arginine biosynthesis; L-arginine from L-ornithine and carbamoyl phosphate: step 2/3. The polypeptide is Argininosuccinate synthase (Rhodococcus jostii (strain RHA1)).